The chain runs to 406 residues: Pyruvate dehydrogenase E1 component subunit beta-2, chloroplastic (406 aa).

The N-terminal 44 residues, 1–44 (MSSIIHGAGAATTTLSTFNSVDSKKLFVAPSRTNLSVRSQRYIV), are a transit peptide targeting the chloroplast. Glu-142 lines the thiamine diphosphate pocket. K(+) is bound by residues Val-195, Ala-243, Ile-244, and Asn-248.

As to quaternary structure, tetramer of 2 alpha and 2 beta subunits. Thiamine diphosphate is required as a cofactor.

The protein resides in the plastid. Its subcellular location is the chloroplast. The catalysed reaction is N(6)-[(R)-lipoyl]-L-lysyl-[protein] + pyruvate + H(+) = N(6)-[(R)-S(8)-acetyldihydrolipoyl]-L-lysyl-[protein] + CO2. Functionally, the pyruvate dehydrogenase complex catalyzes the overall conversion of pyruvate to acetyl-CoA and CO(2). It contains multiple copies of three enzymatic components: pyruvate dehydrogenase (E1), dihydrolipoamide acetyltransferase (E2) and lipoamide dehydrogenase (E3). The sequence is that of Pyruvate dehydrogenase E1 component subunit beta-2, chloroplastic (PDH-E1 BETA) from Arabidopsis thaliana (Mouse-ear cress).